The chain runs to 2321 residues: Neurogenic locus notch homolog protein 3 (2321 aa).

A compositionally biased stretch (basic residues) spans 1 to 14 (MGPGARGRRRRRRP). Residues 1-26 (MGPGARGRRRRRRPMSPPPPPPPVRA) are disordered. Positions 1 to 39 (MGPGARGRRRRRRPMSPPPPPPPVRALPLLLLLAGPGAA) are cleaved as a signal peptide. The span at 15–25 (MSPPPPPPPVR) shows a compositional bias: pro residues. EGF-like domains lie at 40 to 77 (APPC…ERCQ), 78 to 118 (LEDP…PDCS), and 119 to 156 (LPDP…RSCR). The Extracellular segment spans residues 40 to 1643 (APPCLDGSPC…LEPPEPSVPL (1604 aa)). Intrachain disulfides connect Cys43–Cys55, Cys49–Cys65, Cys67–Cys76, Cys82–Cys93, Cys87–Cys106, Cys108–Cys117, Cys123–Cys134, Cys128–Cys144, Cys146–Cys155, Cys162–Cys174, Cys168–Cys183, Cys185–Cys194, Cys201–Cys212, Cys206–Cys222, Cys224–Cys233, Cys240–Cys251, Cys245–Cys260, Cys262–Cys271, Cys278–Cys291, Cys285–Cys300, Cys302–Cys311, Cys318–Cys329, Cys323–Cys338, Cys340–Cys349, Cys355–Cys366, Cys360–Cys377, Cys379–Cys388, Cys395–Cys408, Cys402–Cys417, Cys419–Cys428, Cys435–Cys446, Cys440–Cys455, Cys457–Cys466, Cys473–Cys484, Cys478–Cys493, Cys495–Cys504, Cys511–Cys522, Cys516–Cys531, Cys533–Cys542, Cys549–Cys559, Cys554–Cys568, Cys570–Cys579, Cys586–Cys597, Cys591–Cys606, Cys608–Cys617, Cys624–Cys634, Cys629–Cys643, Cys645–Cys654, Cys661–Cys672, Cys666–Cys681, Cys683–Cys692, Cys699–Cys709, Cys704–Cys718, Cys720–Cys729, Cys738–Cys749, Cys743–Cys758, Cys760–Cys769, Cys775–Cys786, Cys780–Cys796, Cys798–Cys807, Cys814–Cys826, Cys820–Cys835, Cys837–Cys846, Cys853–Cys864, Cys858–Cys873, Cys875–Cys884, Cys891–Cys901, Cys896–Cys910, Cys912–Cys921, Cys928–Cys939, Cys933–Cys948, Cys950–Cys959, Cys966–Cys977, Cys971–Cys986, Cys988–Cys997, Cys1004–Cys1015, Cys1009–Cys1022, Cys1024–Cys1033, Cys1040–Cys1061, Cys1055–Cys1070, Cys1072–Cys1081, Cys1088–Cys1099, Cys1093–Cys1108, Cys1110–Cys1119, Cys1126–Cys1137, Cys1131–Cys1146, Cys1148–Cys1157, Cys1164–Cys1182, Cys1176–Cys1191, Cys1193–Cys1202, Cys1209–Cys1222, Cys1214–Cys1232, Cys1234–Cys1243, Cys1250–Cys1261, Cys1255–Cys1275, Cys1277–Cys1286, Cys1293–Cys1304, Cys1298–Cys1313, and Cys1315–Cys1324. The 38-residue stretch at 158-195 (DVDECRVGEPCRHGGTCLNTPGSFRCQCPAGYTGPLCE) folds into the EGF-like 4; calcium-binding domain. The region spanning 197-234 (PAVPCAPSPCRNGGTCRQSGDLTYDCACLPGFEGQNCE) is the EGF-like 5 domain. The region spanning 236-272 (NVDDCPGHRCLNGGTCVDGVNTYNCQCPPEWTGQFCT) is the EGF-like 6; calcium-binding domain. In terms of domain architecture, EGF-like 7 spans 274 to 312 (DVDECQLQPNACHNGGTCFNTLGGHSCVCVNGWTGESCS). The EGF-like 8; calcium-binding domain occupies 314 to 350 (NIDDCATAVCFHGATCHDRVASFYCACPMGKTGLLCH). Residues 351-389 (LDDACVSNPCHEDAICDTNPVNGRAICTCPPGFTGGACD) enclose the EGF-like 9 domain. An EGF-like 10; calcium-binding domain is found at 391-429 (DVDECSIGANPCEHLGRCVNTQGSFLCQCGRGYTGPRCE). The EGF-like 11; calcium-binding domain maps to 431-467 (DVNECLSGPCRNQATCLDRIGQFTCICMAGFTGTYCE). An EGF-like 12; calcium-binding domain is found at 469–505 (DIDECQSSPCVNGGVCKDRVNGFSCTCPSGFSGSTCQ). The EGF-like 13; calcium-binding domain occupies 507–543 (DVDECASTPCRNGAKCVDQPDGYECRCAEGFEGTLCD). The 36-residue stretch at 545–580 (NVDDCSPDPCHHGRCVDGIASFSCACAPGYTGTRCE) folds into the EGF-like 14; calcium-binding domain. The region spanning 582 to 618 (QVDECRSQPCRHGGKCLDLVDKYLCRCPSGTTGVNCE) is the EGF-like 15; calcium-binding domain. In terms of domain architecture, EGF-like 16; calcium-binding spans 620-655 (NIDDCASNPCTFGVCRDGINRYDCVCQPGFTGPLCN). In terms of domain architecture, EGF-like 17; calcium-binding spans 657-693 (EINECASSPCGEGGSCVDGENGFRCLCPPGSLPPLCL). EGF-like domains follow at residues 695–730 (PSHP…PRCS), 734–770 (ARDA…RQCE), and 771–808 (LLSP…PRCQ). The 38-residue stretch at 810–847 (DVDECAGPAPCGPHGICTNLAGSFSCTCHGGYTGPSCD) folds into the EGF-like 21; calcium-binding domain. The EGF-like 22; calcium-binding domain maps to 849-885 (DINDCDPNPCLNGGSCQDGVGSFSCSCLPGFAGPRCA). In terms of domain architecture, EGF-like 23; calcium-binding spans 887 to 922 (DVDECLSNPCGPGTCTDHVASFTCTCPPGYGGFHCE). EGF-like domains lie at 924 to 960 (DLPD…AHCQ), 962 to 998 (EADP…PQCQ), 1000 to 1034 (LVDW…RLCD), 1036 to 1082 (RSLP…SHCE), and 1084 to 1120 (EVDP…DNCE). The 37-residue stretch at 1122-1158 (DVDECASQPCQHGGSCIDLVARYLCSCPPGTLGVLCE) folds into the EGF-like 29; calcium-binding domain. The EGF-like 30; calcium-binding domain occupies 1160-1203 (NEDDCGPGPPLDSGPRCLHNGTCVDLVGGFRCTCPPGYTGLRCE). Residue Asn1179 is glycosylated (N-linked (GlcNAc...) asparagine). EGF-like domains lie at 1205 to 1244 (DINE…PRCQ), 1246 to 1287 (VLSP…PRCE), 1289 to 1325 (VARS…PSCR), and 1335 to 1373 (SNAS…PRCE). A glycan (N-linked (GlcNAc...) asparagine) is linked at Asn1336. 12 disulfide bridges follow: Cys1339–Cys1350, Cys1344–Cys1361, Cys1363–Cys1372, Cys1387–Cys1410, Cys1392–Cys1405, Cys1401–Cys1417, Cys1428–Cys1451, Cys1433–Cys1446, Cys1442–Cys1458, Cys1467–Cys1493, Cys1475–Cys1488, and Cys1484–Cys1500. LNR repeat units follow at residues 1387-1427 (CPRA…PWRQ), 1428-1458 (CEAL…NFDC), and 1467-1505 (CNPV…SEVP). N-linked (GlcNAc...) asparagine glycosylation is present at Asn1438. The chain crosses the membrane as a helical span at residues 1644–1664 (LPLLVAGAVLLLVILVLGVMV). Residues 1665–2321 (ARRKREHSTL…EVTPKRQVLA (657 aa)) are Cytoplasmic-facing. 5 ANK repeats span residues 1838 to 1867 (TGET…DTNA), 1871 to 1901 (SGRT…DLDA), 1905 to 1934 (DGST…DVNA), 1938 to 1967 (LGKS…NKDM), and 1971 to 2000 (KEET…NREI). The interval 2024–2120 (LDQPSGPRSP…FGGPPASPGG (97 aa)) is disordered. Positions 2039–2053 (LGPLLCPPGAFLPGL) are enriched in low complexity. Arg2174 carries the post-translational modification Omega-N-methylarginine. Positions 2190–2321 (APGPQLLNPG…EVTPKRQVLA (132 aa)) are disordered. Over residues 2269-2289 (STPSPATATGAMATTTGALPA) the composition is skewed to low complexity. Over residues 2296 to 2308 (VPSSLAQAQTQLG) the composition is skewed to polar residues.

This sequence belongs to the NOTCH family. Heterodimer of a C-terminal fragment N(TM) and a N-terminal fragment N(EC) which are probably linked by disulfide bonds. Interacts with MAML1, MAML2 and MAML3 which act as transcriptional coactivators for NOTCH3. Interacts with PSMA1. Interacts with HIF1AN. Post-translationally, synthesized in the endoplasmic reticulum as an inactive form which is proteolytically cleaved by a furin-like convertase in the trans-Golgi network before it reaches the plasma membrane to yield an active, ligand-accessible form. Cleavage results in a C-terminal fragment N(TM) and a N-terminal fragment N(EC). Following ligand binding, it is cleaved by TNF-alpha converting enzyme (TACE) to yield a membrane-associated intermediate fragment called notch extracellular truncation (NEXT). This fragment is then cleaved by presenilin dependent gamma-secretase to release a notch-derived peptide containing the intracellular domain (NICD) from the membrane. In terms of processing, phosphorylated. Hydroxylated by HIF1AN. In terms of tissue distribution, ubiquitously expressed in fetal and adult tissues.

The protein resides in the cell membrane. It is found in the nucleus. Its function is as follows. Functions as a receptor for membrane-bound ligands Jagged1, Jagged2 and Delta1 to regulate cell-fate determination. Upon ligand activation through the released notch intracellular domain (NICD) it forms a transcriptional activator complex with RBPJ/RBPSUH and activates genes of the enhancer of split locus. Affects the implementation of differentiation, proliferation and apoptotic programs. This Homo sapiens (Human) protein is Neurogenic locus notch homolog protein 3 (NOTCH3).